Reading from the N-terminus, the 277-residue chain is 2-dehydro-3-deoxyphosphooctonate aldolase (277 aa).

Belongs to the KdsA family.

The protein localises to the cytoplasm. The catalysed reaction is D-arabinose 5-phosphate + phosphoenolpyruvate + H2O = 3-deoxy-alpha-D-manno-2-octulosonate-8-phosphate + phosphate. It participates in carbohydrate biosynthesis; 3-deoxy-D-manno-octulosonate biosynthesis; 3-deoxy-D-manno-octulosonate from D-ribulose 5-phosphate: step 2/3. The protein operates within bacterial outer membrane biogenesis; lipopolysaccharide biosynthesis. The polypeptide is 2-dehydro-3-deoxyphosphooctonate aldolase (Dichelobacter nodosus (strain VCS1703A)).